The sequence spans 147 residues: 16 kDa phloem protein 2 (147 aa).

The 103-residue stretch at Met-1 to Ala-103 folds into the C2 domain. Residues Asp-20, Asp-26, Asp-73, Asp-75, and Asp-81 each coordinate Ca(2+). Residues Glu-126–Tyr-147 are disordered.

Ca(2+) serves as cofactor.

Binds to both sense and antisense RNA. Can also bind sheared DNA and dodecamer DNA with a low affinity. Interacts with mesophyll plasmodesmata to mediate its own cell-to-cell transport and potentiate RNA trafficking. May play a role in plant defense signaling. This chain is 16 kDa phloem protein 2, found in Arabidopsis thaliana (Mouse-ear cress).